A 342-amino-acid chain; its full sequence is Cystein proteinase inhibitor protein salarin (342 aa).

Positions 1–19 (MKSLVLLLLVAVTVSSVVS) are cleaved as a signal peptide. A glycan (N-linked (GlcNAc) asparagine) is linked at asparagine 153. O-linked (GlcNAc) threonine glycosylation is present at threonine 184.

N-glycosylated, with sialylated biantennary complex-type glycans. In terms of processing, O-glycosylated, with sialylated oligosaccharides. As to expression, expressed in the skin, liver. intestine, spleen, pancreas and kidney.

The protein resides in the cytoplasm. Its subcellular location is the vacuole. Inhibits papain and ficin (cysteine proteinases) but not trypsin (a serine proteinase). The chain is Cystein proteinase inhibitor protein salarin (salarin) from Salmo salar (Atlantic salmon).